A 196-amino-acid polypeptide reads, in one-letter code: Protein TEX261 (196 aa).

5 helical membrane passes run Phe3–Val23, Ser42–Phe62, Ile70–Ile90, Phe97–Glu117, and Val125–Ser145.

This sequence belongs to the SVP26 family.

Its subcellular location is the membrane. The polypeptide is Protein TEX261 (TEX261) (Homo sapiens (Human)).